The chain runs to 292 residues: ATP synthase gamma chain (292 aa).

This sequence belongs to the ATPase gamma chain family. As to quaternary structure, F-type ATPases have 2 components, CF(1) - the catalytic core - and CF(0) - the membrane proton channel. CF(1) has five subunits: alpha(3), beta(3), gamma(1), delta(1), epsilon(1). CF(0) has three main subunits: a, b and c.

The protein resides in the cell membrane. Functionally, produces ATP from ADP in the presence of a proton gradient across the membrane. The gamma chain is believed to be important in regulating ATPase activity and the flow of protons through the CF(0) complex. In Streptococcus pneumoniae serotype 2 (strain D39 / NCTC 7466), this protein is ATP synthase gamma chain.